We begin with the raw amino-acid sequence, 255 residues long: Probable iron chelatin transport ATP-binding protein jhp_0821 (255 aa).

The ABC transporter domain maps to 3–240; that stretch reads LEVKNLSFKY…HNLSALYDTP (238 aa). 35–42 serves as a coordination point for ATP; sequence APNGSGKT.

Belongs to the ABC transporter superfamily.

It localises to the cell inner membrane. Part of a binding-protein-dependent transport system for an iron chelatin. Probably responsible for energy coupling to the transport system (Potential). In Helicobacter pylori (strain J99 / ATCC 700824) (Campylobacter pylori J99), this protein is Probable iron chelatin transport ATP-binding protein jhp_0821.